The sequence spans 42 residues: Proline-rich antimicrobial peptide 2 (42 aa).

Hemolymph.

The protein localises to the secreted. In terms of biological role, antimicrobial protein. Has antibacterial activity against the Gram-positive bacterium M.luteus (MIC=8.6 uM). Lacks antibacterial activity against the Gram-positive bacteria B.circulans, L.monocytogenes, S.aureus, and S.lutea, and the Gram-negative bacteria E.coli D31, E.coli ATCC 25922, and S.typhimurium. Lacks antifungal activity against S.cerevisiae, P.pastoris, Z.marxianus, C.albicans, C.fructus, C.wickerhamii, A.niger, F.oxysporum, and T.harizianum. In Galleria mellonella (Greater wax moth), this protein is Proline-rich antimicrobial peptide 2.